A 203-amino-acid polypeptide reads, in one-letter code: Small ribosomal subunit protein uS4 (203 aa).

An S4 RNA-binding domain is found at 93–154; it reads RRFDNVVYRC…KSRNLDAVAD (62 aa).

It belongs to the universal ribosomal protein uS4 family. Part of the 30S ribosomal subunit. Contacts protein S5. The interaction surface between S4 and S5 is involved in control of translational fidelity.

One of the primary rRNA binding proteins, it binds directly to 16S rRNA where it nucleates assembly of the body of the 30S subunit. In terms of biological role, with S5 and S12 plays an important role in translational accuracy. The polypeptide is Small ribosomal subunit protein uS4 (Chlorobaculum parvum (strain DSM 263 / NCIMB 8327) (Chlorobium vibrioforme subsp. thiosulfatophilum)).